Here is a 149-residue protein sequence, read N- to C-terminus: Major outer capsid protein (149 aa).

As to quaternary structure, homotrimer.

It is found in the virion. Functionally, assembles to form an icosahedral capsid with a T=13 symmetry. Drives the penetration of the inner capsid (core) into the cytoplasm. This chain is Major outer capsid protein (P8), found in Pseudomonas phage phi6 (Bacteriophage phi-6).